The chain runs to 572 residues: MARHLITSAIPYINGIKHLGNLVGSQLPADLYARYLRGRDNEVMFICATDEHGTPAELAAAKAGKPIAVYCAEMHEVQAEIARNFGLSFDHFGRSSSERNHVLTQHFAGKLDENGYIAEVEERQVYSIDDGRFLPDRYIEGTCPNCGYDKARGDQCENCTKQLDPTDLIEPRSAISGSTNLEVRATKHLYLRQRSLKDRIAAWIDSKTDWPILTTSIARKWLNDGDGLQDRGITRDLDWGIPVKKGDKPWPGMEGKVFYVWFDAPIEYIAATAEGADKRGEPDSAWRRWWRLDEGAEDVTYTQFMGKDNVPFHTLSFPATIIGSGEPWKLVDYIKSFNYLTYDGGQFSTSQGRGVFMDQALSILPADYWRWWLLSHAPESGDSEFTWDNFQQSVNKDLADVLGNFVSRITKFCRSKFGETIPQGGSYGPEEEALIQALTTRIRAYEGFMDHVEVRKSAAELRAIWVLGNEYLQSAAPWSTFKTDPDKAAMQVRLGLNLIRLYAVLSAPFIPFAADAMLAAMQTENRDWPDDVRAALEALPAGHAFTVPEVLFAKISDESRDEWQDRFKGIRG.

The short motif at 11–21 is the 'HIGH' region element; sequence PYINGIKHLGN. 4 residues coordinate Zn(2+): cysteine 143, cysteine 146, cysteine 156, and cysteine 159. The short motif at 346–350 is the 'KMSKS' region element; that stretch reads QFSTS. Threonine 349 lines the ATP pocket.

The protein belongs to the class-I aminoacyl-tRNA synthetase family. MetG type 1 subfamily. In terms of assembly, monomer. Zn(2+) serves as cofactor.

It localises to the cytoplasm. It catalyses the reaction tRNA(Met) + L-methionine + ATP = L-methionyl-tRNA(Met) + AMP + diphosphate. In terms of biological role, is required not only for elongation of protein synthesis but also for the initiation of all mRNA translation through initiator tRNA(fMet) aminoacylation. The polypeptide is Methionine--tRNA ligase (Paracoccus denitrificans (strain Pd 1222)).